A 1555-amino-acid polypeptide reads, in one-letter code: MSEQTPAEAGAAGAREDACRDYQSSLEDLTFNSKPHINMLTILAEENLPFAKEIVSLIEAQTAKAPSSEKLPVMYLMDSIVKNVGREYLTAFTKNLVATFICVFEKVDENTRKSLFKLRSTWDEIFPLKKLYALDVRVNSLDPAWPIKPLPPNVNTSSIHVNPKFLNKSPEEPSTPGTVVSSPSISTPPIVPDIQKNLTQEQLIRQQLLAKQKQLLELQQKKLELELEQAKAQLAVSLSVQQETSNLGPGSAPSKLHVSQIPPMAVKAPHQVPVQSEKSRPGPSLQIQDLKGTNRDPRLNRISQHSHGKDQSHRKEFLMNTLNQSDTKTSKTIPSEKLNSSKQEKSKSGEKITKKELDQLDSKSKSKSKSPSPLKNKLSHTKDLKNQESESMRLSDMNKRDPRLKKHLQDKTDGKDDDVKEKRKTAEKKDKDEHMKSSEHRLAGSRNKIINGIVQKQDTITEESEKQGTKPGRSSTRKRSRSRSPKSRSPIIHSPKRRDRRSPKRRQRSMSPTSTPKAGKIRQSGAKQSHMEEFTPPSREDRNAKRSTKQDIRDPRRMKKTEEERPQETTNQHSTKSGTEPKENVENWQSSKSAKRWKSGWEENKSLQQVDEHSKPPHLRHRESWSSTKGILSPRAPKQQQHRLSVDANLQIPKELTLASKRELLQKTSERLASGEITQDDFLVVVHQIRQLFQYQEGVREEQRSPFNDRFPLKRPRYEDSDKPFVDSPASRFAGLDTNQRLTALAEDRPLFDGPSRPSVARDGPTKMIFEGPNKLSPRIDGPPTPASLRFDGSPGQMGGGGPLRFEGPQGQLGGGCPLRFEGPPGPVGTPLRFEGPIGQAGGGGFRFEGSPGLRFEGSPGGLRFEGPGGQPVGGLRFEGHRGQPVGGLRFEGPHGQPVGGLRFDNPRGQPVGGLRFEGGHGPSGAAIRFDGPHGQPGGGIRFEGPLLQQGVGMRFEGPHGQSVAGLRFEGQHNQLGGNLRFEGPHGQPGVGIRFEGPLVQQGGGMRFEGPSVPGGGLRIEGPLGQGGPRFEGCHALRFDGQPGQPSLLPRFDGLHGQPGPRFERTPGQPGPQRFDGPPGQQVQPRFDGVPQRFDGPQHQQASRFDIPLGLQGTRFDNHPSQRLESVSFNQTGPYNDPPGNAFNAPSQGLQFQRHEQIFDSPQGPNFNGPHGPGNQSFSNPLNRASGHYFDEKNLQSSQFGNFGNIPAPMTVGNIQASQQVLSGVAQPVAFGQGQQFLPVHPQNPGFVQNPSGALPKAYPDNHLSQVDVNELFSKLLKTGILKLSQTDSATTQVSEVTAQPPPEEEEDQNEDQDVPDLTNFTVEELKQRYDSVINRLYTGIQCYSCGMRFTTSQTDVYADHLDWHYRQNRTEKDVSRKVTHRRWYYSLTDWIEFEEIADLEERAKSQFFEKVHEEVVLKTQEAAKEKEFQSVPAGPAGAVESCEICQEQFEQYWDEEEEEWHLKNAIRVDGKIYHPSCYEDYQNTSSFDCTPSPSKTPVENPLNIMLNIVKNELQEPCDSPKVKEERIDTPPACTEESIATPSEIKTENDTVESV.

At Ser-2 the chain carries N-acetylserine. Residues Ala-14–Asp-142 enclose the CID domain. A Phosphoserine; by WNK1 modification is found at Ser-120. A Phosphothreonine; by WNK1 modification is found at Thr-121. A disordered region spans residues Asn-167–Ser-186. Phosphoserine occurs at positions 169 and 182. Residues Ser-174–Ser-186 are compositionally biased toward low complexity. The stretch at Gln-202 to Ser-239 forms a coiled coil. Residues Val-266–Ala-648 are disordered. A Glycyl lysine isopeptide (Lys-Gly) (interchain with G-Cter in SUMO2) cross-link involves residue Lys-291. Over residues His-307 to Phe-317 the composition is skewed to basic and acidic residues. A compositionally biased stretch (polar residues) spans Asn-320–Ile-333. Lys-328 participates in a covalent cross-link: Glycyl lysine isopeptide (Lys-Gly) (interchain with G-Cter in SUMO2). Composition is skewed to basic and acidic residues over residues Lys-342–Ser-364, His-380–Glu-421, and Glu-427–Leu-442. Lys-456 is covalently cross-linked (Glycyl lysine isopeptide (Lys-Gly) (interchain with G-Cter in SUMO2)). Thr-459 carries the post-translational modification Phosphothreonine. Over residues Ser-475–Lys-486 the composition is skewed to basic residues. 4 positions are modified to phosphoserine: Ser-489, Ser-494, Ser-509, and Ser-511. Residues Ser-494–Arg-508 show a composition bias toward basic residues. Residues Ser-529–Gln-567 are compositionally biased toward basic and acidic residues. The segment covering Glu-568 to Gly-578 has biased composition (polar residues). Residues Ser-599–Lys-615 show a composition bias toward basic and acidic residues. Ser-645 carries the phosphoserine modification. Lys-654 is covalently cross-linked (Glycyl lysine isopeptide (Lys-Gly) (interchain with G-Cter in SUMO2)). Residue Ser-705 is modified to Phosphoserine. 2 disordered regions span residues Phe-707–Arg-732 and Arg-749–Asp-781. The span at Pro-716–Phe-725 shows a compositional bias: basic and acidic residues. Lys-723 is covalently cross-linked (Glycyl lysine isopeptide (Lys-Gly) (interchain with G-Cter in SUMO2)). Phosphoserine occurs at positions 728 and 777. Thr-785 bears the Phosphothreonine mark. At Ser-794 the chain carries Phosphoserine. Asymmetric dimethylarginine occurs at positions 805, 820, and 833. The residue at position 851 (Ser-851) is a Phosphoserine. Residues Arg-929, Arg-942, Arg-955, Arg-981, Arg-994, and Arg-1007 each carry the asymmetric dimethylarginine modification. The interval His-1056–Gln-1081 is disordered. Asymmetric dimethylarginine occurs at positions 1093 and 1104. 2 disordered regions span residues Val-1127–Ser-1147 and Phe-1159–Gly-1187. The residue at position 1161 (Ser-1161) is a Phosphoserine. Low complexity predominate over residues Pro-1162–Asn-1175. Residue Lys-1278 forms a Glycyl lysine isopeptide (Lys-Gly) (interchain with G-Cter in SUMO2) linkage. The span at Ser-1289–Thr-1298 shows a compositional bias: polar residues. The segment at Ser-1289–Val-1315 is disordered. Residues Pro-1303 to Val-1315 are compositionally biased toward acidic residues. Residues Lys-1419, Lys-1511, and Lys-1524 each participate in a glycyl lysine isopeptide (Lys-Gly) (interchain with G-Cter in SUMO2) cross-link. The disordered stretch occupies residues Glu-1516–Val-1555. A compositionally biased stretch (basic and acidic residues) spans Asp-1519 to Asp-1529. Thr-1530 carries the post-translational modification Phosphothreonine. Lys-1546 participates in a covalent cross-link: Glycyl lysine isopeptide (Lys-Gly) (interchain with G-Cter in SUMO2).

As to quaternary structure, associates with the phosphorylated CTD domain of POLR2A /RNA polymerase II. Phosphorylation at Ser-120 and/or Thr-121 by WNK1 weakens its association with POLR2A/RNA polymerase II, promoting transcript release from the chromatin template and mRNA export to the cytoplasm.

It is found in the nucleus. Component of pre-mRNA cleavage complex II, which promotes transcription termination by RNA polymerase II. This is Pre-mRNA cleavage complex 2 protein Pcf11 from Homo sapiens (Human).